The chain runs to 210 residues: Dynein regulatory complex protein 12 (210 aa).

The segment at 1-23 is disordered; sequence MPPKNKEKGKKSGAQKKKKNWGA. The span at 7–20 shows a compositional bias: basic residues; sequence EKGKKSGAQKKKKN. The stretch at 49–161 forms a coiled coil; it reads RDEARRAKAS…EAKYEEILHD (113 aa). Positions 188-210 are disordered; it reads HKEQQRQFGLTPPGSLRPPAPSL.

The protein belongs to the DRC12 family. Component of the nexin-dynein regulatory complex (N-DRC).

The protein localises to the cytoplasm. It localises to the cytoskeleton. It is found in the flagellum axoneme. Functionally, component of the nexin-dynein regulatory complex (N-DRC), a key regulator of ciliary/flagellar motility which maintains the alignment and integrity of the distal axoneme and regulates microtubule sliding in motile axonemes. This is Dynein regulatory complex protein 12 from Homo sapiens (Human).